We begin with the raw amino-acid sequence, 48 residues long: Protein YgdT (48 aa).

This chain is Protein YgdT (ygdT), found in Escherichia coli (strain K12).